A 228-amino-acid polypeptide reads, in one-letter code: L-ribulose-5-phosphate 4-epimerase UlaF (228 aa).

Substrate contacts are provided by residues 26–27 (GN), 43–44 (SG), and 72–73 (SS). Asp-74, His-93, and His-95 together coordinate Zn(2+). Asp-118 functions as the Proton donor/acceptor in the catalytic mechanism. His-167 lines the Zn(2+) pocket. Residue Tyr-225 is the Proton donor/acceptor of the active site.

Belongs to the aldolase class II family. AraD/FucA subfamily. It depends on Zn(2+) as a cofactor.

The catalysed reaction is L-ribulose 5-phosphate = D-xylulose 5-phosphate. The protein operates within cofactor degradation; L-ascorbate degradation; D-xylulose 5-phosphate from L-ascorbate: step 4/4. Functionally, catalyzes the isomerization of L-ribulose 5-phosphate to D-xylulose 5-phosphate. Is involved in the anaerobic L-ascorbate utilization. In Escherichia coli O6:K15:H31 (strain 536 / UPEC), this protein is L-ribulose-5-phosphate 4-epimerase UlaF.